The primary structure comprises 166 residues: Putative universal stress protein SE_1385 (166 aa).

Belongs to the universal stress protein A family.

The protein localises to the cytoplasm. This Staphylococcus epidermidis (strain ATCC 12228 / FDA PCI 1200) protein is Putative universal stress protein SE_1385.